The chain runs to 143 residues: Large ribosomal subunit protein uL15 (143 aa).

Positions 1–52 (MKLNTLAPAAGSKSAPKRLGRGIGSGLGKTSGKGHKGQKARSGGYHKVGFEG) are disordered. Gly residues predominate over residues 21 to 31 (RGIGSGLGKTS).

The protein belongs to the universal ribosomal protein uL15 family. In terms of assembly, part of the 50S ribosomal subunit.

Functionally, binds to the 23S rRNA. In Francisella tularensis subsp. holarctica (strain FTNF002-00 / FTA), this protein is Large ribosomal subunit protein uL15.